A 240-amino-acid polypeptide reads, in one-letter code: Oxygen-insensitive NADPH nitroreductase (240 aa).

Residues 11–15 (HRSIR), serine 39, glutamine 67, 128–131 (YIGG), and 167–169 (KPR) each bind FMN.

The protein belongs to the flavin oxidoreductase frp family. As to quaternary structure, homodimer. FMN serves as cofactor.

In terms of biological role, catalyzes the reduction of nitroaromatic compounds using NADPH. Has a broad electron acceptor specificity. Reduces nitrofurazone by a ping-pong bi-bi mechanism possibly to generate a two-electron transfer product. Major oxygen-insensitive nitroreductase in E.coli. This is Oxygen-insensitive NADPH nitroreductase (nfsA) from Escherichia coli (strain K12).